The primary structure comprises 355 residues: Peptide chain release factor 1 (355 aa).

Gln231 carries the N5-methylglutamine modification. Positions Leu283–Ile303 are disordered.

The protein belongs to the prokaryotic/mitochondrial release factor family. Post-translationally, methylated by PrmC. Methylation increases the termination efficiency of RF1.

Its subcellular location is the cytoplasm. In terms of biological role, peptide chain release factor 1 directs the termination of translation in response to the peptide chain termination codons UAG and UAA. In Campylobacter lari (strain RM2100 / D67 / ATCC BAA-1060), this protein is Peptide chain release factor 1.